The sequence spans 61 residues: Small ribosomal subunit protein uS14 (61 aa).

The Zn(2+) site is built by C24, C27, C40, and C43.

It belongs to the universal ribosomal protein uS14 family. Zinc-binding uS14 subfamily. Part of the 30S ribosomal subunit. Contacts proteins S3 and S10. Zn(2+) serves as cofactor.

Functionally, binds 16S rRNA, required for the assembly of 30S particles and may also be responsible for determining the conformation of the 16S rRNA at the A site. This chain is Small ribosomal subunit protein uS14, found in Mycobacterium sp. (strain JLS).